A 306-amino-acid chain; its full sequence is MFKFTAQQHVYDINGVKVGGQPGEYPTVLIGSIFYRGHKIVSDGQKGIFDKDAAKALLDQEAELSAETGNPFIIDVLGESVEALTKYVEFILENTTAPFLLDSISPDVRVGALKNLGKDPEIQKRLIYNSIEEHYTEEELAAIKEAGLKTAVILAFSKKALKPNARIDLLQGKDDKEGLIAAAKRAGIEQFLVDPGVLDVASNSWTTEAINVVKEQFGYPGGCAPSNAVYLWKKMRSKGTPFFEVAGAAVFTYPITQGADFILYGPMMNAPWVYRAIATTDAMIAYNNKLTGVKMGTTEHPLLKIF.

The protein belongs to the MtrH family.

The catalysed reaction is methyl-Co(III)-[glycine betaine-specific corrinoid protein] + (6S)-5,6,7,8-tetrahydrofolate = Co(I)-[glycine betaine-specific corrinoid protein] + (6S)-5-methyl-5,6,7,8-tetrahydrofolate + H(+). Functionally, methyltransferase able to catalyze the transfer of a methyl group from methylcobalamin (methylCbl) to tetrahydrofolate (THF) in vitro, to generate methyl-THF and cob(I)alamin. In vivo, the methyl group probably comes from the adjacently encoded methylated corrinoid protein DSY3155. The methyl group may then be ultimately converted to carbon dioxide, and its oxidation would also provide reducing equivalents for anaerobic respiration. Thus, may function in the pathway that allows anaerobic methylotrophic growth of D.hafniense using glycine betaine. The sequence is that of [methyl-Co(III) glycine betaine-specific corrinoid protein]--tetrahydrofolate methyltransferase from Desulfitobacterium hafniense (strain Y51).